The following is an 872-amino-acid chain: Lysosomal cholesterol signaling protein (872 aa).

Residues 1-40 are Lumenal-facing; it reads MNSFSNLPAENLTIAVNMTKTLPTAVMHGFNSTNDPPSMS. The tract at residues 3–372 is PIN-like transporter; the sequence is SFSNLPAENL…SAWLLTFPTM (370 aa). Asn-11, Asn-17, and Asn-31 each carry an N-linked (GlcNAc...) asparagine glycan. The helical transmembrane segment at 41–61 threads the bilayer; it reads ITRLFPALLECFGIVLCGYIA. 2 residues coordinate cholesterol: Phe-45 and Tyr-59. At 62–81 the chain is on the cytoplasmic side; that stretch reads GRANVITSTQAKGLGNFVSR. Residues 82-102 form a helical membrane-spanning segment; that stretch reads FALPALLFKNMVVLNFSNVDW. Over 103–106 the chain is Lumenal; it reads SFLY. A helical transmembrane segment spans residues 107 to 127; it reads SILIAKASVFFIVCVLTLLVA. Over 128-135 the chain is Cytoplasmic; it reads SPDSRFSK. Residues 136-156 traverse the membrane as a discontinuously helical segment; sequence AGLFPIFATQSNDFALGYPIV. At 157–169 the chain is on the lumenal side; the sequence is EALYQTTYPEYLQ. Residues 170–190 traverse the membrane as a helical segment; sequence YIYLVAPISLMMLNPIGFIFC. The Cytoplasmic portion of the chain corresponds to 191–215; the sequence is EIQKWKDTQNASQNKIKIVGLGLLR. Residues 216–236 traverse the membrane as a discontinuously helical segment; it reads VLQNPIVFMVFIGIAFNFILD. The Lumenal segment spans residues 237-245; sequence RKVPVYVEN. A discontinuously helical membrane pass occupies residues 246-266; the sequence is FLDGLGNSFSGSALFYLGLTM. The Cytoplasmic segment spans residues 267–275; the sequence is VGKIKRLKK. Cholesterol contacts are provided by Gly-268, Lys-269, and Ile-270. A helical membrane pass occupies residues 276 to 296; it reads SAFVVLILLITAKLLVLPLLC. Over 297-317 the chain is Lumenal; that stretch reads REMVELLDKGDSVVNHTSLSN. Asn-311 carries N-linked (GlcNAc...) asparagine glycosylation. Residues 318-338 form a discontinuously helical membrane-spanning segment; that stretch reads YAFLYGVFPVAPGVAIFATQF. At 339 to 348 the chain is on the cytoplasmic side; that stretch reads NMEVEIITSG. A helical membrane pass occupies residues 349–369; it reads MVISTFVSAPIMYVSAWLLTF. Residues 370–383 lie on the Lumenal side of the membrane; the sequence is PTMDPKPLAYAIQN. The tract at residues 382 to 719 is GPCR; the sequence is QNVSFDISIV…FGIFGLDKHL (338 aa). A glycan (N-linked (GlcNAc...) asparagine) is linked at Asn-383. Residues 384 to 404 traverse the membrane as a helical segment; the sequence is VSFDISIVSLISLIWSQAILL. Over 405 to 416 the chain is Cytoplasmic; it reads LSKKYKQLPHML. Residues 417-437 form a helical membrane-spanning segment; that stretch reads TTNLLIAQSIVCAGMMIWNFV. At 438–440 the chain is on the lumenal side; it reads KEK. Residues 441–461 traverse the membrane as a helical segment; it reads NFVGQILVFVLLYSSLYSTYL. At 462–482 the chain is on the cytoplasmic side; it reads WTGLLAISLFLLKKRERVQIP. Residues 483-503 traverse the membrane as a helical segment; sequence VGIIIISGWGIPALLVGVLLI. The Lumenal portion of the chain corresponds to 504-522; the sequence is TGKHSGDSIDSAFFYGKEQ. The helical transmembrane segment at 523-543 threads the bilayer; it reads MITTAVTLFCSILIAGISLMC. Over 544 to 662 the chain is Cytoplasmic; the sequence is MNRTAQAGSY…GDQQLTRHVL (119 aa). A cholesterol-binding site is contributed by Arg-659. Residues 663–683 form a helical membrane-spanning segment; the sequence is LCLLLIIGLFANLSSCLWWLF. Over 684–693 the chain is Lumenal; the sequence is NQEPGRLYVE. Residues 694–714 traverse the membrane as a helical segment; that stretch reads LQFFCAVFNFGQGFISFGIFG. Over 715–872 the chain is Cytoplasmic; that stretch reads LDKHLIILPF…SSPPSHSPKT (158 aa). The DEP domain occupies 759 to 837; sequence YHRDLCIRNI…DEYLFYRFLQ (79 aa).

As to quaternary structure, homodimer; via the transporter region and DEP domain. Interacts with the GATOR1 complex; preventing interaction between GATOR1 and KICSTOR; interaction is disrupted upon cholesterol starvation.

It is found in the lysosome membrane. Its function is as follows. Cholesterol-binding protein that acts as a regulator of mTORC1 signaling pathway. Acts as a sensor of cholesterol to signal cholesterol sufficiency to mTORC1: in presence of cholesterol, binds cholesterol, leading to disruption of the interaction between the GATOR1 and KICSTOR complexes and promotion of mTORC1 signaling. Upon cholesterol starvation, GPR155/LYCHOS is unable to perturb the association between GATOR1 and KICSTOR, leading to mTORC1 signaling inhibition. Binds indole-3-acetic acid and may play a role in tryptophan metabolism. The protein is Lysosomal cholesterol signaling protein (GPR155) of Pongo abelii (Sumatran orangutan).